Reading from the N-terminus, the 1342-residue chain is MVSRSSEGAEGPPPSAPKPPNTPAKSRLSRLGSSPSKREDKSRDDRMIKSSAKDVAELKDYQLGDCLGKGAFGSVYRALNWNTGETVAVKQIKLADLPKSELRLEIDLLKNLDHPNIVKYQGFVKSAETLNIILEYCENGSLHSIAKNFGRFPENLVGLYMSQVLHGLLYLHEQGVIHRDIKGANILTTKEGLVKLADFGVASRTTGLSESSVVGTPYWMAPEVIELSGATTASDIWSLGCTVIELLEGKPPYYNMQPMPALFRIVNDDHPPLPQGASPAVKDFLMQCFQKDPNLRVSARKLLKHPWIVNARRSDSVVPKSSTEYEEAVRSVQEWNEALRSPSAGTLRRPVKHDQSPIPVPPTRHTPTKDTLPSPVSRNVTDRFRSPVPTEEEEDNWDDDFATAISPSALQLPHLRPHDNFGGMLSSEKLKAFASLDGTMIKSDDSFGDSDSSFGSSRRSDEPDPLETIRPYPLKQPTAESTQLQELPRSQINKTSMASMHHVPILTQNPTPPTKQPRPASYYKENSIEDYSDLIQANEDVLDSKLGAFQEADENVDPFESSPSKEAIRNRASAEDVMGQQPQLRKQISVKRHRSAVEIQRFAENERDEDFSDLLGTDEVMIDQPESDGSSDQSTLMLNSKLSNNSWLGDQDDEDDPFAQLEEGLDEMDLEANIARDKHARLRNQVEGLVSSLKTSQDEDVLAEISEQLLTVFCDFPETKNIIISAHGMLPILEILDMCRRRDITSCLLKIVNAIIYNDYEIQENLCFVGGIPIINEFASKKYPREIRLEAAAFVQQMYQTSTLTLQMFVSAGGLNVLVEFLEDDYEDERDLVLIGVNGIWSVFELQGSTPKNDFCRILSRNSVLDPLSLVLSRVLDEDGELAEIVEGRIANIFFIFSQAENHVKEMVAERTVLHRVLKELRRMTPAHQITMLKFIKNLSMLSTTLDSLQNSNAIDVLTDLLRATMKRPHFREVSNQILNTIYNMCRLNKSRQEDAALNGIVPLLQKIVKTERPLKEFALPILCDMAHSGKVGRRELWRNKGLAFYISLLSDPYWQVTALDAIFTWLQEETAKVEEHLLDHRPDRPSFTDSIVRCLTISKANAFENLLEPLQKLLRLSPPIASTLARPDLFTRIGQKLHHSKAAVRLNLLRIISSICDSSEEQGGLLAKYGLLDAIRELEHDPAILVRDMAGKLIQSNEKSEAYGMGKRKPMVRRRSTSATPPNLLANQSAPSTPQMNRTSQSKAYYEGKEGSRHPRNALSGSALALRPGSRDGSTPSLTAGLNGSTGASRTRLPRGVSNRMSHVDLLSEEDSARPSSSLSRRQSVLHRRRRQTQADADWTP.

The segment covering 1–10 (MVSRSSEGAE) has biased composition (low complexity). The tract at residues 1-47 (MVSRSSEGAEGPPPSAPKPPNTPAKSRLSRLGSSPSKREDKSRDDRM) is disordered. The span at 11 to 22 (GPPPSAPKPPNT) shows a compositional bias: pro residues. The segment covering 36–47 (SKREDKSRDDRM) has biased composition (basic and acidic residues). The Protein kinase domain maps to 61–308 (YQLGDCLGKG…ARKLLKHPWI (248 aa)). ATP contacts are provided by residues 67 to 75 (LGKGAFGSV) and lysine 90. Aspartate 180 functions as the Proton acceptor in the catalytic mechanism. Disordered regions lie at residues 336-396 (NEAL…EEDN), 441-486 (IKSD…QLQE), and 552-591 (ADEN…ISVK). Over residues 369 to 379 (KDTLPSPVSRN) the composition is skewed to polar residues. Residues 658-695 (FAQLEEGLDEMDLEANIARDKHARLRNQVEGLVSSLKT) are a coiled coil. Residues 1201–1342 (SEAYGMGKRK…QTQADADWTP (142 aa)) form a disordered region. The segment covering 1207–1217 (GKRKPMVRRRS) has biased composition (basic residues). Polar residues-rich tracts occupy residues 1218–1244 (TSAT…SQSK) and 1273–1290 (DGST…TGAS). The segment covering 1315–1324 (RPSSSLSRRQ) has biased composition (low complexity).

This sequence belongs to the protein kinase superfamily. Ser/Thr protein kinase family. CDC7 subfamily. Mg(2+) is required as a cofactor.

The enzyme catalyses L-seryl-[protein] + ATP = O-phospho-L-seryl-[protein] + ADP + H(+). The catalysed reaction is L-threonyl-[protein] + ATP = O-phospho-L-threonyl-[protein] + ADP + H(+). In terms of biological role, required for early events during cytokinesis including localization of cytoskeletal components to the cytokinetic ring. The chain is Cytokinesis protein sepH from Aspergillus terreus (strain NIH 2624 / FGSC A1156).